The sequence spans 310 residues: Ribosomal RNA small subunit methyltransferase H (310 aa).

Residues 40–42 (GGH), Asp-59, Phe-89, Asp-104, and Gln-111 each bind S-adenosyl-L-methionine.

This sequence belongs to the methyltransferase superfamily. RsmH family.

The protein localises to the cytoplasm. It carries out the reaction cytidine(1402) in 16S rRNA + S-adenosyl-L-methionine = N(4)-methylcytidine(1402) in 16S rRNA + S-adenosyl-L-homocysteine + H(+). Specifically methylates the N4 position of cytidine in position 1402 (C1402) of 16S rRNA. This Amoebophilus asiaticus (strain 5a2) protein is Ribosomal RNA small subunit methyltransferase H.